A 232-amino-acid chain; its full sequence is 6-phosphogluconolactonase (232 aa).

This sequence belongs to the glucosamine/galactosamine-6-phosphate isomerase family. 6-phosphogluconolactonase subfamily.

It catalyses the reaction 6-phospho-D-glucono-1,5-lactone + H2O = 6-phospho-D-gluconate + H(+). The protein operates within carbohydrate degradation; pentose phosphate pathway; D-ribulose 5-phosphate from D-glucose 6-phosphate (oxidative stage): step 2/3. Hydrolysis of 6-phosphogluconolactone to 6-phosphogluconate. The polypeptide is 6-phosphogluconolactonase (pgl) (Aggregatibacter actinomycetemcomitans (Actinobacillus actinomycetemcomitans)).